A 300-amino-acid chain; its full sequence is Fatty acid hydroxylase uhd1 (300 aa).

Residues 14–20 (GANGFVG), arginine 39, 63–64 (DL), 83–85 (VAS), tyrosine 156, lysine 160, 183–186 (PVYI), and serine 199 each bind NADP(+). The Proton donor role is filled by lysine 160.

This sequence belongs to the NAD(P)-dependent epimerase/dehydratase family. Dihydroflavonol-4-reductase subfamily.

It participates in secondary metabolite biosynthesis. Functionally, fatty acid hydroxylase; part of the gene cluster that mediates the biosynthesis of the glycolipid biosurfactant ustilagic acid (UA). UA is a secreted cellobiose glycolipid that is toxic for many microorganisms and confers biocontrol activity to U.maydis. UA consists of 15,16-dihydroxypalmitic or 2,15,16-trihydroxypalmitic acid, which is O-glycosidically linked to cellobiose at its terminal hydroxyl group. In addition, the cellobiose moiety is acetylated and acylated with a short-chain hydroxy fatty acid. UA biosynthesis starts with omega-hydroxylation of palmitic acid catalyzed by the cytochrome P450 monooxygenase cyp1. Terminal hydroxylation of palmitic acid precedes subterminal hydroxylation catalyzed by the cytochrome P450 monooxygenase cyp2. Sequential glucosylation of the hydroxy fatty acid is probably catalyzed by the glycosyltransferase ugt1. The cellobiose lipid is further decorated by acetylation of the proximal glucose residue and by acylation with a short-chain beta-hydroxy fatty acid at the distal glucose residue. The acyltransferase uat1 may be a good candidate for catalyzing either acetylation or acylation of the cellobiose lipid. The fatty acid synthase fas2 may be involved in synthesis of the carbon backbone of the short-chain beta-hydroxy fatty acid esterified to the cellobiose disaccharide. The secreted UA consists of a mixture of both alpha-hydroxylated and non-hydroxylated glycolipids; therefore, alpha-hydroxylation of the long-chain fatty, catalyzed by the fatty acid hydroxylase ahd1, occurs late in UA biosynthesis and may be the last step before secretion. This Mycosarcoma maydis (Corn smut fungus) protein is Fatty acid hydroxylase uhd1.